We begin with the raw amino-acid sequence, 334 residues long: D-alanine--D-alanine ligase (334 aa).

An ATP-grasp domain is found at 110–306 (KHVLKSLGID…FDHVVDLIVQ (197 aa)). 138 to 190 (LPYPFVIKPVRGGSTIGVHAIFSKSEYLDLSAHADTLEDRMIVEEYVSGQEVQ) serves as a coordination point for ATP. Positions 258, 272, and 274 each coordinate Mg(2+).

The protein belongs to the D-alanine--D-alanine ligase family. Mg(2+) serves as cofactor. Requires Mn(2+) as cofactor.

Its subcellular location is the cytoplasm. It catalyses the reaction 2 D-alanine + ATP = D-alanyl-D-alanine + ADP + phosphate + H(+). It participates in cell wall biogenesis; peptidoglycan biosynthesis. Its function is as follows. Cell wall formation. The chain is D-alanine--D-alanine ligase from Anaplasma marginale (strain Florida).